Consider the following 113-residue polypeptide: Ribosome-binding factor A (113 aa).

Belongs to the RbfA family. Monomer. Binds 30S ribosomal subunits, but not 50S ribosomal subunits or 70S ribosomes.

The protein resides in the cytoplasm. In terms of biological role, one of several proteins that assist in the late maturation steps of the functional core of the 30S ribosomal subunit. Associates with free 30S ribosomal subunits (but not with 30S subunits that are part of 70S ribosomes or polysomes). Required for efficient processing of 16S rRNA. May interact with the 5'-terminal helix region of 16S rRNA. The protein is Ribosome-binding factor A of Oceanobacillus iheyensis (strain DSM 14371 / CIP 107618 / JCM 11309 / KCTC 3954 / HTE831).